A 518-amino-acid chain; its full sequence is Bifunctional purine biosynthesis protein PurH (518 aa).

The MGS-like domain maps to 1–144 (MSKRALISVS…KNHAAVTVVC (144 aa)).

Belongs to the PurH family.

The catalysed reaction is (6R)-10-formyltetrahydrofolate + 5-amino-1-(5-phospho-beta-D-ribosyl)imidazole-4-carboxamide = 5-formamido-1-(5-phospho-D-ribosyl)imidazole-4-carboxamide + (6S)-5,6,7,8-tetrahydrofolate. The enzyme catalyses IMP + H2O = 5-formamido-1-(5-phospho-D-ribosyl)imidazole-4-carboxamide. The protein operates within purine metabolism; IMP biosynthesis via de novo pathway; 5-formamido-1-(5-phospho-D-ribosyl)imidazole-4-carboxamide from 5-amino-1-(5-phospho-D-ribosyl)imidazole-4-carboxamide (10-formyl THF route): step 1/1. It functions in the pathway purine metabolism; IMP biosynthesis via de novo pathway; IMP from 5-formamido-1-(5-phospho-D-ribosyl)imidazole-4-carboxamide: step 1/1. The chain is Bifunctional purine biosynthesis protein PurH from Lactococcus lactis subsp. cremoris (strain SK11).